The sequence spans 744 residues: 4'-phospho-dehydrooxetanocin synthase (744 aa).

Residues 119–259 (TVTLVNLCVI…KMLKKELKLD (141 aa)) form the B12-binding domain. Residues Arg-135, Ser-139, Ser-184, Gly-241, Glu-242, and Glu-308 each contribute to the cob(II)alamin site. The 247-residue stretch at 299-545 (SKFRGALTLE…IVSYMLASME (247 aa)) folds into the Radical SAM core domain. Residues Cys-313, Cys-318, and Cys-321 each coordinate [4Fe-4S] cluster. The cob(II)alamin site is built by Pro-322, His-325, Lys-326, Ala-361, and Glu-363. S-adenosyl-L-methionine-binding residues include Glu-436 and Glu-545.

It belongs to the radical SAM superfamily. It depends on [4Fe-4S] cluster as a cofactor. Requires cob(II)alamin as cofactor.

The enzyme catalyses dAMP + S-adenosyl-L-methionine = 4'-phospho-dehydrooxetanocin + 5'-deoxyadenosine + L-methionine + H(+). It carries out the reaction AH2 + 2 S-adenosyl-L-methionine = 2 5'-deoxyadenosin-5'-yl radical + 2 L-methionine + A + 2 H(+). The catalysed reaction is 2 5'-deoxyadenosin-5'-yl radical + 2 dAMP + A = 2 4'-phospho-dehydrooxetanocin + 2 5'-deoxyadenosine + AH2. With respect to regulation, requires OxsA for the oxidative ring contraction activity. Activation of OxsB requires its direct interaction with OxsA and is independent of OxsA phosphohydrolase activity. In contrast to ring contraction, methylation does not require the presence of OxsA. Its function is as follows. Isomerase involved in the biosynthesis of oxetanocin A (OXT-A), a nucleoside analog with antitumor, antiviral and antibacterial properties. Catalyzes an oxidative ring contraction of dAMP, forming an oxetane aldehyde. In addition, shows methyltransferase activity in vitro and is able to catalyze the radical mediated, stereoselective C2'-methylation of dAMP to form methylated 2'-dAMP. Also catalyzes the demethylation of S-adenosyl-L-methionine (SAM) to S-adenosyl-L-homocysteine (SAH). The chain is 4'-phospho-dehydrooxetanocin synthase from Priestia megaterium (Bacillus megaterium).